We begin with the raw amino-acid sequence, 474 residues long: MTVKTRFAPSPTGYLHVGGARTALYSWLFAKNQGGEFVLRIEDTDLERNSQEAVDAIIEGMHWMGMEWDEGPYYQSKRFDRYNEVVDQLLAEDKAYKCYASKELLDEIRAEQEANKEMARYDANHPKIVAANAAAKEGDACVIRFRNPKEGSVVFDDQIRGRIEISNSQLDDLIIRRTDGAPTYNFVVVVDDWDMGITQVIRGEDHINNTPRQINIYEALGAPVPMFAHCAMILGDDGAKLSKRHGAVSVMQYRDEGYLPNALNNYLVRLGWSHGDQEIFSQEEMINLFSLSAVSKSASAFNTDKLLWLNNHYIKSSEPEYVAKYLQWHLDQKEISLDNGPAITEVIKLVGERCNTLIELADQSRYFYQDFEEFEAGAAKKHLRGVAKGPLELALAKVEALEEWTTENLHNVIEEVCAELEIGMGKIGMPLRVAVTGGGQSPSVDAVMQLVGKERVVARIKMALAFIAEREANA.

The 'HIGH' region motif lies at 9–19; it reads PSPTGYLHVGG. Residues 240 to 244 carry the 'KMSKS' region motif; sequence KLSKR. Residue Lys243 participates in ATP binding.

It belongs to the class-I aminoacyl-tRNA synthetase family. Glutamate--tRNA ligase type 1 subfamily. In terms of assembly, monomer.

It is found in the cytoplasm. It carries out the reaction tRNA(Glu) + L-glutamate + ATP = L-glutamyl-tRNA(Glu) + AMP + diphosphate. Its function is as follows. Catalyzes the attachment of glutamate to tRNA(Glu) in a two-step reaction: glutamate is first activated by ATP to form Glu-AMP and then transferred to the acceptor end of tRNA(Glu). This chain is Glutamate--tRNA ligase, found in Aliivibrio fischeri (strain ATCC 700601 / ES114) (Vibrio fischeri).